Here is a 427-residue protein sequence, read N- to C-terminus: 3-phosphoshikimate 1-carboxyvinyltransferase (427 aa).

3-phosphoshikimate is bound by residues Lys20, Ser21, and Arg25. Residue Lys20 coordinates phosphoenolpyruvate. Phosphoenolpyruvate contacts are provided by Gly92 and Arg120. Residues Ser166, Gln168, Asp312, and Lys339 each contribute to the 3-phosphoshikimate site. Gln168 contacts phosphoenolpyruvate. Catalysis depends on Asp312, which acts as the Proton acceptor. Phosphoenolpyruvate-binding residues include Arg343 and Arg385.

This sequence belongs to the EPSP synthase family. Monomer.

It localises to the cytoplasm. The enzyme catalyses 3-phosphoshikimate + phosphoenolpyruvate = 5-O-(1-carboxyvinyl)-3-phosphoshikimate + phosphate. It functions in the pathway metabolic intermediate biosynthesis; chorismate biosynthesis; chorismate from D-erythrose 4-phosphate and phosphoenolpyruvate: step 6/7. Catalyzes the transfer of the enolpyruvyl moiety of phosphoenolpyruvate (PEP) to the 5-hydroxyl of shikimate-3-phosphate (S3P) to produce enolpyruvyl shikimate-3-phosphate and inorganic phosphate. The polypeptide is 3-phosphoshikimate 1-carboxyvinyltransferase (Streptococcus uberis (strain ATCC BAA-854 / 0140J)).